The following is a 71-amino-acid chain: Prophage lysis protein S homolog EssQ (71 aa).

Belongs to the lambda phage S protein family.

This is Prophage lysis protein S homolog EssQ (essQ) from Escherichia coli (strain K12).